Consider the following 178-residue polypeptide: MSEVSCKKRDDYLEWPEYFMAVAFLSAQRSKDPNSQVGACIVNSENKIVGIGYNGMPNGCSDDVLPWRRTAENKLDTKYPYVCHAELNAIMNKNSTDVKGCSMYVALFPCNECAKLIIQAGIKEVIFMSDKYHDSDEATAARLLFNMAGVTFRKFIPKCSKIVIDFDSINSRPSQKLQ.

Residues 14-145 (EWPEYFMAVA…DEATAARLLF (132 aa)) form the CMP/dCMP-type deaminase domain. Position 84 (His84) interacts with Zn(2+). Catalysis depends on Glu86, which acts as the Proton donor. Positions 110 and 113 each coordinate Zn(2+). Ser174 carries the post-translational modification Phosphoserine.

It belongs to the cytidine and deoxycytidylate deaminase family. As to quaternary structure, homohexamer. Requires Zn(2+) as cofactor.

It catalyses the reaction dCMP + H2O + H(+) = dUMP + NH4(+). It carries out the reaction 5-hydroxymethyl-dCMP + H2O + H(+) = 5-hydroxymethyl-dUMP + NH4(+). Its activity is regulated as follows. Allosteric enzyme whose activity is greatly influenced by the end products of its metabolic pathway, dCTP and dTTP. In terms of biological role, catalyzes the deamination of dCMP to dUMP, providing the nucleoside monophosphate substrate for the thymidylate synthase/TYMS. Also, part of a nucleotide salvage pathway that eliminates epigenetically modified 5-hydroxymethyl-dCMP (hmdCMP) in a two-step process entailing deamination to cytotoxic 5-hydroxymethyl-dUMP (hmdUMP), followed by its hydrolysis into 5-hydroxymethyluracil (hmU) and 2-deoxy-D-ribose 5-phosphate (deoxyribosephosphate). Catalyzes the first step in that pathway, the deamination of 5-hydroxymethyl-dCMP (hmdCMP). The sequence is that of Deoxycytidylate deaminase from Homo sapiens (Human).